The following is a 570-amino-acid chain: Dihydroxy-acid dehydratase (570 aa).

Cys61 serves as a coordination point for [2Fe-2S] cluster. Asp94 is a binding site for Mg(2+). Cys135 provides a ligand contact to [2Fe-2S] cluster. Positions 136 and 137 each coordinate Mg(2+). Lys137 bears the N6-carboxylysine mark. Residue Cys207 coordinates [2Fe-2S] cluster. Glu459 is a Mg(2+) binding site. Catalysis depends on Ser485, which acts as the Proton acceptor.

Belongs to the IlvD/Edd family. Homodimer. Requires [2Fe-2S] cluster as cofactor. It depends on Mg(2+) as a cofactor.

It catalyses the reaction (2R)-2,3-dihydroxy-3-methylbutanoate = 3-methyl-2-oxobutanoate + H2O. It carries out the reaction (2R,3R)-2,3-dihydroxy-3-methylpentanoate = (S)-3-methyl-2-oxopentanoate + H2O. It participates in amino-acid biosynthesis; L-isoleucine biosynthesis; L-isoleucine from 2-oxobutanoate: step 3/4. It functions in the pathway amino-acid biosynthesis; L-valine biosynthesis; L-valine from pyruvate: step 3/4. Functions in the biosynthesis of branched-chain amino acids. Catalyzes the dehydration of (2R,3R)-2,3-dihydroxy-3-methylpentanoate (2,3-dihydroxy-3-methylvalerate) into 2-oxo-3-methylpentanoate (2-oxo-3-methylvalerate) and of (2R)-2,3-dihydroxy-3-methylbutanoate (2,3-dihydroxyisovalerate) into 2-oxo-3-methylbutanoate (2-oxoisovalerate), the penultimate precursor to L-isoleucine and L-valine, respectively. This Lactococcus lactis subsp. cremoris (strain MG1363) protein is Dihydroxy-acid dehydratase.